The primary structure comprises 1256 residues: Putative protein DDB_G0292252 (1256 aa).

4 disordered regions span residues 1–53 (MSDD…NNNN), 145–243 (LLNG…SISR), 898–951 (EQQQ…PVET), and 1069–1136 (SHPT…ATIS). Residues 147–214 (NGNNSNNNSN…NGNNINTSNG (68 aa)) show a composition bias toward low complexity. Over residues 222–243 (QTESTEQDFTSTSQNSTPSISR) the composition is skewed to polar residues. 2 stretches are compositionally biased toward low complexity: residues 898–916 (EQQQ…SNNE) and 925–942 (TTAA…TTTT). Polar residues predominate over residues 1069-1079 (SHPTIQSTSSP). Over residues 1080–1136 (STSSSNNNNSTTTATNNNGNNGNNNNGNGNNNNNNNNNNNNNNNNNNNNNNGPATIS) the composition is skewed to low complexity.

The sequence is that of Putative protein DDB_G0292252 from Dictyostelium discoideum (Social amoeba).